A 406-amino-acid chain; its full sequence is MKNVPKIWTVAELTREIGQTLNDNPDFVNCWVSGEISNYKNHRPSGHWYFTLKDEQSSMKGVMFRSRAERVRFTPQDGMKVLVRGSIRIYERDGTIQLYAEEMQPSGVGALYLAFEQLKERLGQEGLFAPERKKAIPRYPRRIGIVTSPTGAAIKDILKVMFRRNPQISWILAPAAVQGELAPKEVAQAIARLNRHSQVDVIIVGRGGGSLEELWAFNTEEVARAIAASGIPVISAVGHETDVTIADMVADLRAPTPSAAAELAVPVWRELKSDLEQLEARLHSTMSSQLQRKRQRLDSLKTIGPLSNPFWRIDQNRQRLDSLSERVEQGMTRFVSDKNGILKLLTAKLDLLSPLAILGRGYSLTYGPKGNVLRKSDDINVGQQVQVRLQQGILTCAVLAKSVDSD.

This sequence belongs to the XseA family. As to quaternary structure, heterooligomer composed of large and small subunits.

It is found in the cytoplasm. It carries out the reaction Exonucleolytic cleavage in either 5'- to 3'- or 3'- to 5'-direction to yield nucleoside 5'-phosphates.. In terms of biological role, bidirectionally degrades single-stranded DNA into large acid-insoluble oligonucleotides, which are then degraded further into small acid-soluble oligonucleotides. This is Exodeoxyribonuclease 7 large subunit from Desulfitobacterium hafniense (strain Y51).